The chain runs to 72 residues: Crustacean hyperglycemic hormone (72 aa).

Gln-1 is subject to Pyrrolidone carboxylic acid. Phe-3 carries the post-translational modification D-phenylalanine; in form CHH-II. Intrachain disulfides connect Cys-7–Cys-43, Cys-23–Cys-39, and Cys-26–Cys-52. At Val-72 the chain carries Valine amide.

Stereoinversion of L-Phe (in CHH-I) to D-Phe (in CHH-II) the two forms are present in a ratio 3:1 (CHH-I/CHH-II). As to expression, produced by the medulla terminalis X-organ in the eyestalks and transported to the sinus gland where they are stored and released.

The protein resides in the secreted. In terms of biological role, hormone found in the sinus gland of isopods and decapods which controls the blood sugar level. Has a secretagogue action over the amylase released from the midgut gland. May act as a stress hormone and may be involved in the control of molting and reproduction. The polypeptide is Crustacean hyperglycemic hormone (Procambarus bouvieri (Mexican crayfish)).